The primary structure comprises 247 residues: Uridylate kinase (247 aa).

16–19 provides a ligand contact to ATP; that stretch reads KLSG. A UMP-binding site is contributed by Gly-58. The ATP site is built by Gly-59 and Arg-63. Residues Asp-78 and 139–146 each bind UMP; that span reads TGNPFFTT. Residues Thr-166, Tyr-172, and Asp-175 each contribute to the ATP site.

Belongs to the UMP kinase family. In terms of assembly, homohexamer.

It is found in the cytoplasm. The enzyme catalyses UMP + ATP = UDP + ADP. It participates in pyrimidine metabolism; CTP biosynthesis via de novo pathway; UDP from UMP (UMPK route): step 1/1. Inhibited by UTP. Its function is as follows. Catalyzes the reversible phosphorylation of UMP to UDP. The chain is Uridylate kinase from Xylella fastidiosa (strain 9a5c).